Reading from the N-terminus, the 346-residue chain is Holliday junction branch migration complex subunit RuvB (346 aa).

The segment at Met1–Tyr181 is large ATPase domain (RuvB-L). Residues Leu20, Arg21, Gly62, Lys65, Thr66, Thr67, Glu128–Phe130, Arg171, Tyr181, and Arg218 contribute to the ATP site. Thr66 serves as a coordination point for Mg(2+). The tract at residues Thr182–Glu252 is small ATPAse domain (RuvB-S). The interval Asn255 to Glu346 is head domain (RuvB-H). Arg291, Arg310, and Arg315 together coordinate DNA.

This sequence belongs to the RuvB family. As to quaternary structure, homohexamer. Forms an RuvA(8)-RuvB(12)-Holliday junction (HJ) complex. HJ DNA is sandwiched between 2 RuvA tetramers; dsDNA enters through RuvA and exits via RuvB. An RuvB hexamer assembles on each DNA strand where it exits the tetramer. Each RuvB hexamer is contacted by two RuvA subunits (via domain III) on 2 adjacent RuvB subunits; this complex drives branch migration. In the full resolvosome a probable DNA-RuvA(4)-RuvB(12)-RuvC(2) complex forms which resolves the HJ.

It localises to the cytoplasm. The enzyme catalyses ATP + H2O = ADP + phosphate + H(+). In terms of biological role, the RuvA-RuvB-RuvC complex processes Holliday junction (HJ) DNA during genetic recombination and DNA repair, while the RuvA-RuvB complex plays an important role in the rescue of blocked DNA replication forks via replication fork reversal (RFR). RuvA specifically binds to HJ cruciform DNA, conferring on it an open structure. The RuvB hexamer acts as an ATP-dependent pump, pulling dsDNA into and through the RuvAB complex. RuvB forms 2 homohexamers on either side of HJ DNA bound by 1 or 2 RuvA tetramers; 4 subunits per hexamer contact DNA at a time. Coordinated motions by a converter formed by DNA-disengaged RuvB subunits stimulates ATP hydrolysis and nucleotide exchange. Immobilization of the converter enables RuvB to convert the ATP-contained energy into a lever motion, pulling 2 nucleotides of DNA out of the RuvA tetramer per ATP hydrolyzed, thus driving DNA branch migration. The RuvB motors rotate together with the DNA substrate, which together with the progressing nucleotide cycle form the mechanistic basis for DNA recombination by continuous HJ branch migration. Branch migration allows RuvC to scan DNA until it finds its consensus sequence, where it cleaves and resolves cruciform DNA. This Brucella melitensis biotype 2 (strain ATCC 23457) protein is Holliday junction branch migration complex subunit RuvB.